The primary structure comprises 613 residues: Leucine aminopeptidase 2 (613 aa).

Residues 134–136 (QAQ) and 265–270 (PYGGME) each bind a peptide. H294 lines the Zn(2+) pocket. E295 functions as the Proton acceptor in the catalytic mechanism. Zn(2+) contacts are provided by H298 and E317. Catalysis depends on Y382, which acts as the Proton donor.

It belongs to the peptidase M1 family. Requires Zn(2+) as cofactor.

Its subcellular location is the cytoplasm. The protein localises to the nucleus. The enzyme catalyses an epoxide + H2O = an ethanediol. Functionally, aminopeptidase that preferentially cleaves di- and tripeptides. Also has low epoxide hydrolase activity (in vitro). Can hydrolyze the epoxide leukotriene LTA(4) but it forms preferentially 5,6-dihydroxy-7,9,11,14-eicosatetraenoic acid rather than the cytokine leukotriene B(4) as the product compared to the homologous mammalian enzyme (in vitro). This is Leucine aminopeptidase 2 from Pyricularia oryzae (strain 70-15 / ATCC MYA-4617 / FGSC 8958) (Rice blast fungus).